The sequence spans 341 residues: Ferredoxin--NADP reductase (341 aa).

The FAD site is built by Asp38, Gln46, Tyr51, Val91, Phe125, Asp292, and Thr333.

It belongs to the ferredoxin--NADP reductase type 2 family. In terms of assembly, homodimer. FAD is required as a cofactor.

It catalyses the reaction 2 reduced [2Fe-2S]-[ferredoxin] + NADP(+) + H(+) = 2 oxidized [2Fe-2S]-[ferredoxin] + NADPH. The polypeptide is Ferredoxin--NADP reductase (Gluconacetobacter diazotrophicus (strain ATCC 49037 / DSM 5601 / CCUG 37298 / CIP 103539 / LMG 7603 / PAl5)).